The sequence spans 172 residues: uncharacterized protein (172 aa).

Residues 1–28 (MAAAGVTAKAGGGTSAAAASLIRARSPA) show a composition bias toward low complexity. Residues 1–172 (MAAAGVTAKA…GGRRSGRDAG (172 aa)) are disordered. A compositionally biased stretch (basic residues) spans 58 to 68 (PRRRSRARRGH). Residues 80-100 (TVGGEGQASQIGGGGGGGGGR) show a composition bias toward gly residues. Residues 129–138 (PGLASSPGVA) are compositionally biased toward low complexity. Residues 139 to 165 (PAGGSGGLWSGAGLCSGLGARGFPGGR) show a composition bias toward gly residues.

This is an uncharacterized protein from Homo sapiens (Human).